The following is a 410-amino-acid chain: Acetate kinase (410 aa).

A Mg(2+)-binding site is contributed by Asn-7. Lys-14 provides a ligand contact to ATP. Arg-98 serves as a coordination point for substrate. The active-site Proton donor/acceptor is the Asp-155. Residues 215 to 219, 290 to 292, and 338 to 342 contribute to the ATP site; these read HLGNG, DMR, and GIGEN. Glu-392 serves as a coordination point for Mg(2+).

This sequence belongs to the acetokinase family. As to quaternary structure, homodimer. It depends on Mg(2+) as a cofactor. Requires Mn(2+) as cofactor.

The protein resides in the cytoplasm. It catalyses the reaction acetate + ATP = acetyl phosphate + ADP. Its pathway is metabolic intermediate biosynthesis; acetyl-CoA biosynthesis; acetyl-CoA from acetate: step 1/2. Functionally, catalyzes the formation of acetyl phosphate from acetate and ATP. Can also catalyze the reverse reaction. The sequence is that of Acetate kinase from Kocuria rhizophila (strain ATCC 9341 / DSM 348 / NBRC 103217 / DC2201).